The following is a 61-amino-acid chain: Small ribosomal subunit protein uS14 (61 aa).

Zn(2+) is bound by residues C24, C27, C40, and C43.

It belongs to the universal ribosomal protein uS14 family. Zinc-binding uS14 subfamily. As to quaternary structure, part of the 30S ribosomal subunit. Contacts proteins S3 and S10. It depends on Zn(2+) as a cofactor.

Its function is as follows. Binds 16S rRNA, required for the assembly of 30S particles and may also be responsible for determining the conformation of the 16S rRNA at the A site. This Campylobacter hominis (strain ATCC BAA-381 / DSM 21671 / CCUG 45161 / LMG 19568 / NCTC 13146 / CH001A) protein is Small ribosomal subunit protein uS14.